The sequence spans 650 residues: MGVLLREALRSMCVNNQWSYAVFWKIGCQNSSLLIWEECYNETESSSNPRRLCGLGVDTQGNEKVQLLTNRMMLNNRIILVGEGLVGRAAFTGHHQWILANSFNRDVHPPEVINEMLLQFSAGIQTVAVFPVVPHGVVQLGSSLPIMENLGFVNDVKGLILQLGCVPGALLSENYRTYEPAADFIGVPVSRIIPSQGHKILQSSAFVAETSKQHFNSTGSSDHQMVEESPCNLVDEHEGGWQSTTGFLTAGEVAVPSNPDAWLNQNFSCMSNVDAAEQQQIPCEDISSKRSLGSDDLFDMLGLDDKNKGCDNSWGVSQMRTEVLTRELSDFRIIQEMDPEFGSSGYELSGTDHLLDAVVSGACSSTKQISDETSESCKTTLTKVSNSSVTTPSHSSPQGSQLFEKKHGQPLGPSSVYGSQISSWVEQAHSLKREGSPRMVNKNETAKPANNRKRLKPGENPRPRPKDRQMIQDRVKELREIIPNGAKCSIDALLERTIKHMLFLQNVSKHSDKLKQTGESKIMKEDGGGATWAFEVGSKSMVCPIVVEDINPPRIFQVEMLCEQRGFFLEIADWIRSLGLTILKGVIETRVDKIWARFTVEASRDVTRMEIFMQLVNILEQTMKCGGNSKTILDGIKATMPLPVTGGCSM.

Disordered regions lie at residues 381–417 and 431–470; these read LTKV…SSVY and LKRE…DRQM. Residues 384-397 show a composition bias toward low complexity; that stretch reads VSNSSVTTPSHSSP. Positions 451–458 match the Nuclear localization signal motif; that stretch reads NRKRLKPG. The bHLH domain occupies 455–504; it reads LKPGENPRPRPKDRQMIQDRVKELREIIPNGAKCSIDALLERTIKHMLFL. Basic and acidic residues predominate over residues 456–470; it reads KPGENPRPRPKDRQM.

It belongs to the bHLH protein family. LHW subfamily. As to quaternary structure, homodimer. Can also interact with bHLH proteins. Expressed in both root and shoot meristems. Present in root tips.

The protein localises to the nucleus. Its function is as follows. Transcription activator that regulates root development; promotes the production of stele cells in roots. Coordinately controls the number of all vascular cell types by regulating the size of the pool of cells from which they arise. This chain is Transcription factor LHW (LHW), found in Arabidopsis thaliana (Mouse-ear cress).